Consider the following 260-residue polypeptide: Phosphate import ATP-binding protein PstB (260 aa).

Residues 14–255 (IETENLNLFY…PKNTKTEEYI (242 aa)) form the ABC transporter domain. 46-53 (GPSGCGKS) serves as a coordination point for ATP.

Belongs to the ABC transporter superfamily. Phosphate importer (TC 3.A.1.7) family. The complex is composed of two ATP-binding proteins (PstB), two transmembrane proteins (PstC and PstA) and a solute-binding protein (PstS).

Its subcellular location is the cell inner membrane. The catalysed reaction is phosphate(out) + ATP + H2O = ADP + 2 phosphate(in) + H(+). In terms of biological role, part of the ABC transporter complex PstSACB involved in phosphate import. Responsible for energy coupling to the transport system. The protein is Phosphate import ATP-binding protein PstB of Borreliella burgdorferi (strain ATCC 35210 / DSM 4680 / CIP 102532 / B31) (Borrelia burgdorferi).